A 548-amino-acid polypeptide reads, in one-letter code: Membrane protein insertase YidC (548 aa).

The helical transmembrane segment at N6–D26 threads the bilayer. The tract at residues N28–S55 is disordered. Low complexity predominate over residues Q30–Q50. 4 helical membrane-spanning segments follow: residues F350–Y370, L420–L440, L458–I478, and P499–V519.

This sequence belongs to the OXA1/ALB3/YidC family. Type 1 subfamily. In terms of assembly, interacts with the Sec translocase complex via SecD. Specifically interacts with transmembrane segments of nascent integral membrane proteins during membrane integration.

The protein localises to the cell inner membrane. Its function is as follows. Required for the insertion and/or proper folding and/or complex formation of integral membrane proteins into the membrane. Involved in integration of membrane proteins that insert both dependently and independently of the Sec translocase complex, as well as at least some lipoproteins. Aids folding of multispanning membrane proteins. The sequence is that of Membrane protein insertase YidC from Escherichia coli O139:H28 (strain E24377A / ETEC).